A 258-amino-acid polypeptide reads, in one-letter code: Pimeloyl-[acyl-carrier protein] methyl ester esterase (258 aa).

Positions 16–242 (LVLLHGWGLN…AAHAPFISHP (227 aa)) constitute an AB hydrolase-1 domain. Residues W22, 82–83 (SM), and 143–147 (FLALQ) each bind substrate. The Nucleophile role is filled by S82. Active-site residues include D207 and H235. H235 lines the substrate pocket.

The protein belongs to the AB hydrolase superfamily. Carboxylesterase BioH family. In terms of assembly, monomer.

The protein localises to the cytoplasm. The enzyme catalyses 6-carboxyhexanoyl-[ACP] methyl ester + H2O = 6-carboxyhexanoyl-[ACP] + methanol + H(+). It functions in the pathway cofactor biosynthesis; biotin biosynthesis. Functionally, the physiological role of BioH is to remove the methyl group introduced by BioC when the pimeloyl moiety is complete. It allows to synthesize pimeloyl-ACP via the fatty acid synthetic pathway through the hydrolysis of the ester bonds of pimeloyl-ACP esters. This is Pimeloyl-[acyl-carrier protein] methyl ester esterase from Yersinia pseudotuberculosis serotype O:1b (strain IP 31758).